A 324-amino-acid chain; its full sequence is dITP/XTP pyrophosphatase (324 aa).

The interval 1–126 (MTKSIFEYKD…SDNKSDFGDV (126 aa)) is unknown. The NTP pyrophosphatase stretch occupies residues 127–324 (LLIATRNEGK…EVFPAWQNKQ (198 aa)). 131-136 (TRNEGK) lines the substrate pocket. Catalysis depends on Asp193, which acts as the Proton acceptor. Asp193 contacts Mg(2+). Substrate-binding positions include Ser194, 277-280 (FGYD), Lys300, and 305-306 (HR).

The protein belongs to the HAM1 NTPase family. In terms of assembly, homodimer. Requires Mg(2+) as cofactor.

The catalysed reaction is XTP + H2O = XMP + diphosphate + H(+). It catalyses the reaction dITP + H2O = dIMP + diphosphate + H(+). The enzyme catalyses ITP + H2O = IMP + diphosphate + H(+). Pyrophosphatase that catalyzes the hydrolysis of nucleoside triphosphates to their monophosphate derivatives, with a high preference for the non-canonical purine nucleotides XTP (xanthosine triphosphate), dITP (deoxyinosine triphosphate) and ITP. Seems to function as a house-cleaning enzyme that removes non-canonical purine nucleotides from the nucleotide pool, thus preventing their incorporation into DNA/RNA and avoiding chromosomal lesions. This Streptococcus thermophilus (strain CNRZ 1066) protein is dITP/XTP pyrophosphatase.